A 565-amino-acid polypeptide reads, in one-letter code: Urease subunit beta (565 aa).

A Urease domain is found at 130–565 (GGIDTHIHFI…LALARKYFMI (436 aa)). His-135, His-137, and Lys-218 together coordinate Ni(2+). The residue at position 218 (Lys-218) is an N6-carboxylysine. His-220 lines the substrate pocket. Ni(2+) is bound by residues His-247 and His-273. His-321 functions as the Proton donor in the catalytic mechanism. Residue Asp-361 coordinates Ni(2+).

Belongs to the metallo-dependent hydrolases superfamily. Urease alpha subunit family. As to quaternary structure, heterohexamer of 3 UreA (alpha) and 3 UreB (beta) subunits. Requires Ni cation as cofactor. Carboxylation allows a single lysine to coordinate two nickel ions.

The protein localises to the cytoplasm. It catalyses the reaction urea + 2 H2O + H(+) = hydrogencarbonate + 2 NH4(+). It functions in the pathway nitrogen metabolism; urea degradation; CO(2) and NH(3) from urea (urease route): step 1/1. The polypeptide is Urease subunit beta (Campylobacter lari).